A 1541-amino-acid chain; its full sequence is ATP-binding cassette sub-family C member 2 (1541 aa).

The Extracellular portion of the chain corresponds to 1–26 (MDKFCNSTFWDLSLLESPEADLPLCF). Asparagine 6 carries N-linked (GlcNAc...) asparagine glycosylation. A helical membrane pass occupies residues 27 to 47 (EQTVLVWIPLGFLWLLAPWQL). Residues 48 to 67 (YSVYRSRTKRSSITKFYLAK) are Cytoplasmic-facing. A helical transmembrane segment spans residues 68 to 88 (QVFVVFLLILAAIDLSLALTE). The Extracellular segment spans residues 89–92 (DTGQ). A helical membrane pass occupies residues 93-113 (ATVPPVRYTNPILYLCTWLLV). The Cytoplasmic segment spans residues 114–125 (LAVQHSRQWCVR). A helical membrane pass occupies residues 126–146 (KNSWFLSLFWILSVLCGVFQF). Residues 147–164 (QTLIRALLKDSKSNMAYS) lie on the Extracellular side of the membrane. Residues 165-185 (YLFFVSYGFQIVLLILTAFSG) traverse the membrane as a helical segment. Topologically, residues 186–309 (PSDSTQTPSV…DYPKSWLIKS (124 aa)) are cytoplasmic. Phosphoserine is present on residues serine 279 and serine 281. The helical transmembrane segment at 310-330 (LFKTFHVVILKSFILKLIHDL) threads the bilayer. The region spanning 318-601 (ILKSFILKLI…LPMVTSSILQ (284 aa)) is the ABC transmembrane type-1 1 domain. The Extracellular portion of the chain corresponds to 331 to 356 (LVFLNPQLLKLLIGFVKSSNSYVWFG). The helical transmembrane segment at 357–377 (YICAILMFAVTLIQSFCLQSY) threads the bilayer. At 378–433 (FQHCFVLGMCVRTTVMSSIYKKALTLSNLARKQYTIGETVNLMSVDSQKLMDATNY) the chain is on the cytoplasmic side. Residues 434–454 (MQLVWSSVIQITLSIFFLWRE) form a helical membrane-spanning segment. The Extracellular segment spans residues 455–457 (LGP). The chain crosses the membrane as a helical span at residues 458–478 (SILAGVGVMVLLIPVNGVLAT). At 479–540 (KIRNIQVQNM…NLLRFGQLQS (62 aa)) the chain is on the cytoplasmic side. The helical transmembrane segment at 541–561 (LLIFILQITPILVSVVTFSVY) threads the bilayer. Over 562-583 (VLVDSANVLNAEKAFTSITLFN) the chain is Extracellular. A helical membrane pass occupies residues 584 to 604 (ILRFPLSMLPMVTSSILQASV). The Cytoplasmic segment spans residues 605-967 (SVDRLERYLG…VKFSIYLKYL (363 aa)). Residues 633 to 857 (VKFSEASFTW…KGVFARNWKT (225 aa)) form the ABC transporter 1 domain. 667-674 (GTVGSGKS) contacts ATP. Disordered stretches follow at residues 862–881 (SGPE…DDDD) and 901–923 (RENS…GKSL). Residue serine 874 is modified to Phosphoserine. Over residues 906–915 (RRTLSRSSRS) the composition is skewed to low complexity. Residues serine 922 and serine 926 each carry the phosphoserine modification. The helical transmembrane segment at 968–988 (QAVGWWSILFIILFYGLNNVA) threads the bilayer. Residues 975-1260 (ILFIILFYGL…LVRMTSEAET (286 aa)) enclose the ABC transmembrane type-1 2 domain. Residues 989–1029 (FIGSNLWLSAWTSDSDNLNGTNNSSSHRDMRIGVFGALGLA) lie on the Extracellular side of the membrane. N-linked (GlcNAc...) asparagine glycans are attached at residues asparagine 1007, asparagine 1010, and asparagine 1011. Residues 1030–1050 (QGICLLISTLWSIYACRNASK) form a helical membrane-spanning segment. Residues 1051-1093 (ALHGQLLTNILRAPMRFFDTTPTGRIVNRFSGDISTVDDLLPQ) are Cytoplasmic-facing. Residues 1094 to 1114 (TLRSWMMCFFGIAGTLVMICM) traverse the membrane as a helical segment. Alanine 1115 is a topological domain (extracellular). Residues 1116–1136 (TPVFAIIIIPLSILYISVQVF) form a helical membrane-spanning segment. The Cytoplasmic portion of the chain corresponds to 1137 to 1207 (YVATSRQLRR…TSNRWLAIRL (71 aa)). A helical membrane pass occupies residues 1208-1228 (ELVGNLVVFCSALLLVIYRKT). The Extracellular portion of the chain corresponds to 1229–1230 (LT). The helical transmembrane segment at 1231–1251 (GDVVGFVLSNALNITQTLNWL) threads the bilayer. Residues 1252-1541 (VRMTSEAETN…GIENVNHTEL (290 aa)) are Cytoplasmic-facing. In terms of domain architecture, ABC transporter 2 spans 1296–1530 (IQFNNYQVRY…RGSFYLMAKE (235 aa)). 1330 to 1337 (GRTGAGKS) is an ATP binding site. Serine 1434 is subject to Phosphoserine.

It belongs to the ABC transporter superfamily. ABCC family. Conjugate transporter (TC 3.A.1.208) subfamily. As to expression, mainly expressed in the liver.

The protein localises to the apical cell membrane. The enzyme catalyses an S-substituted glutathione(in) + ATP + H2O = an S-substituted glutathione(out) + ADP + phosphate + H(+). The catalysed reaction is taurolithocholate 3-sulfate(in) + ATP + H2O = taurolithocholate 3-sulfate(out) + ADP + phosphate + H(+). It catalyses the reaction ATP + H2O + xenobioticSide 1 = ADP + phosphate + xenobioticSide 2.. It carries out the reaction 17beta-estradiol 17-O-(beta-D-glucuronate)(in) + ATP + H2O = 17beta-estradiol 17-O-(beta-D-glucuronate)(out) + ADP + phosphate + H(+). The enzyme catalyses leukotriene C4(in) + ATP + H2O = leukotriene C4(out) + ADP + phosphate + H(+). The catalysed reaction is (4Z,15Z)-bilirubin IXalpha C8-beta-D-glucuronoside(in) + ATP + H2O = (4Z,15Z)-bilirubin IXalpha C8-beta-D-glucuronoside(out) + ADP + phosphate + H(+). It catalyses the reaction (4Z,15Z)-bilirubin IXalpha C8,C12-beta-D-bisglucuronoside(in) + ATP + H2O = (4Z,15Z)-bilirubin IXalpha C8,C12-beta-D-bisglucuronoside(out) + ADP + phosphate + H(+). In terms of biological role, ATP-dependent transporter of the ATP-binding cassette (ABC) family that binds and hydrolyzes ATP to enable active transport of various substrates including many drugs, toxicants and endogenous compound across cell membranes. Transports a wide variety of conjugated organic anions such as sulfate-, glucuronide- and glutathione (GSH)-conjugates of endo- and xenobiotics substrates. Mediates hepatobiliary excretion of mono- and bis-glucuronidated bilirubin molecules and therefore play an important role in bilirubin detoxification. Also mediates hepatobiliary excretion of others glucuronide conjugates such as 17beta-estradiol 17-glucosiduronic acid and leukotriene C4. Transports sulfated bile salt such as taurolithocholate sulfate. Transports various anticancer drugs, such as anthracycline, vinca alkaloid and methotrexate and HIV-drugs such as protease inhibitors. The polypeptide is ATP-binding cassette sub-family C member 2 (Rattus norvegicus (Rat)).